The sequence spans 322 residues: Putative MgpC-like protein MPN_367 (322 aa).

Over residues 1 to 48 (MVGSGAAGSASSLQGNGSNSSGLKSLLRSAPVSVPPSSTSNQTLSLSN) the composition is skewed to low complexity. 2 disordered regions span residues 1–59 (MVGS…AVVS) and 118–145 (DATSTNLPHAAGASQTGLGTGSPREPAL). A compositionally biased stretch (polar residues) spans 120–134 (TSTNLPHAAGASQTG).

This sequence belongs to the MgpC family.

The polypeptide is Putative MgpC-like protein MPN_367 (Mycoplasma pneumoniae (strain ATCC 29342 / M129 / Subtype 1) (Mycoplasmoides pneumoniae)).